We begin with the raw amino-acid sequence, 1151 residues long: Protein BREAST CANCER SUSCEPTIBILITY 2 homolog A (1151 aa).

BRCA2 repeat units follow at residues 63-97, 116-150, 163-197, and 257-291; these read MPGE…EKVT, TAET…SDKI, FGVS…LEED, and LKVP…DPEL. Positions 408 to 427 are disordered; it reads GFIPRGRQPGRPADQPLVDI.

As to quaternary structure, interacts with RAD51 and DMC1. Interacts with DSS1(I). In terms of tissue distribution, expressed in flower buds.

Functionally, involved in double-strand break repair and/or homologous recombination by mediating RAD51- and DMC1-facilitated DNA repair. Plays an essential role in both somatic and meiotic homologous recombination. Is crucial for the formation of RAD51 and DMC1 foci during male meiotic homologous recombination in prophase I. This Arabidopsis thaliana (Mouse-ear cress) protein is Protein BREAST CANCER SUSCEPTIBILITY 2 homolog A.